A 228-amino-acid polypeptide reads, in one-letter code: Cytochrome c oxidase subunit 2 (228 aa).

Over 1 to 26 the chain is Mitochondrial intermembrane; the sequence is MSTWANLGLQDSASPLMEQLIFFHDH. The helical transmembrane segment at 27–48 threads the bilayer; sequence ALLILVMITVLVGYLMFMLFFN. Topologically, residues 49-62 are mitochondrial matrix; it reads NYVNRFLLHGQLIE. Residues 63 to 82 form a helical membrane-spanning segment; sequence MIWTILPAIILLFIALPSLR. The Mitochondrial intermembrane portion of the chain corresponds to 83-228; that stretch reads LLYLLDEINE…FIKWISSNNS (146 aa). The Cu cation site is built by His161, Cys196, Glu198, Cys200, His204, and Met207. Residue Glu198 coordinates Mg(2+).

This sequence belongs to the cytochrome c oxidase subunit 2 family. In terms of assembly, component of the cytochrome c oxidase (complex IV, CIV), a multisubunit enzyme composed of a catalytic core of 3 subunits and several supernumerary subunits. The complex exists as a monomer or a dimer and forms supercomplexes (SCs) in the inner mitochondrial membrane with ubiquinol-cytochrome c oxidoreductase (cytochrome b-c1 complex, complex III, CIII). It depends on Cu cation as a cofactor.

Its subcellular location is the mitochondrion inner membrane. It carries out the reaction 4 Fe(II)-[cytochrome c] + O2 + 8 H(+)(in) = 4 Fe(III)-[cytochrome c] + 2 H2O + 4 H(+)(out). Component of the cytochrome c oxidase, the last enzyme in the mitochondrial electron transport chain which drives oxidative phosphorylation. The respiratory chain contains 3 multisubunit complexes succinate dehydrogenase (complex II, CII), ubiquinol-cytochrome c oxidoreductase (cytochrome b-c1 complex, complex III, CIII) and cytochrome c oxidase (complex IV, CIV), that cooperate to transfer electrons derived from NADH and succinate to molecular oxygen, creating an electrochemical gradient over the inner membrane that drives transmembrane transport and the ATP synthase. Cytochrome c oxidase is the component of the respiratory chain that catalyzes the reduction of oxygen to water. Electrons originating from reduced cytochrome c in the intermembrane space (IMS) are transferred via the dinuclear copper A center (CU(A)) of subunit 2 and heme A of subunit 1 to the active site in subunit 1, a binuclear center (BNC) formed by heme A3 and copper B (CU(B)). The BNC reduces molecular oxygen to 2 water molecules using 4 electrons from cytochrome c in the IMS and 4 protons from the mitochondrial matrix. The polypeptide is Cytochrome c oxidase subunit 2 (mt:CoII) (Drosophila simulans (Fruit fly)).